Here is a 228-residue protein sequence, read N- to C-terminus: Cytidylate kinase (228 aa).

10–18 (GPSGSGKGT) provides a ligand contact to ATP.

This sequence belongs to the cytidylate kinase family. Type 1 subfamily.

It localises to the cytoplasm. It carries out the reaction CMP + ATP = CDP + ADP. The catalysed reaction is dCMP + ATP = dCDP + ADP. This is Cytidylate kinase from Acinetobacter baumannii (strain AB0057).